Reading from the N-terminus, the 167-residue chain is Transcription factor 24 (167 aa).

Residues 1 to 23 show a composition bias toward low complexity; sequence MDRGRPAGSPLSASAEPAPLAAA. The tract at residues 1-60 is disordered; it reads MDRGRPAGSPLSASAEPAPLAAAIRDSRPGRTGPGPAGPGGGSRSGSGRPAAANAARERS. The segment covering 32-45 has biased composition (gly residues); sequence TGPGPAGPGGGSRS. Over residues 46–55 the composition is skewed to low complexity; the sequence is GSGRPAAANA. The 53-residue stretch at 49 to 101 folds into the bHLH domain; the sequence is RPAAANAARERSRVQTLRHAFLELQRTLPSVPPDTKLSKLDVLLLATTYIAHL.

As to quaternary structure, efficient DNA binding requires dimerization with another bHLH protein.

It is found in the nucleus. Its function is as follows. Putative transcription factor. This Homo sapiens (Human) protein is Transcription factor 24 (TCF24).